A 1625-amino-acid chain; its full sequence is Probable cation-transporting ATPase I (1625 aa).

The next 8 membrane-spanning stretches (helical) occupy residues 148-168 (VVSA…PNSA), 177-197 (LAIL…GATV), 358-378 (LIAA…AGAI), 637-657 (ASES…LLLV), 673-693 (WLNP…WSAA), 778-798 (ILAV…ALLV), 968-988 (LTSK…ALAL), and 997-1017 (AVAD…PLVA). The 4-aspartylphosphate intermediate role is filled by Asp1053. Residues Asp1340 and Asp1344 each contribute to the Mg(2+) site. Transmembrane regions (helical) follow at residues 1401-1421 (ILVG…AFGA), 1432-1452 (LLVN…TSQF), and 1547-1567 (VIAT…TPVI).

Belongs to the cation transport ATPase (P-type) (TC 3.A.3) family.

It is found in the cell membrane. It carries out the reaction ATP + H2O = ADP + phosphate + H(+). The sequence is that of Probable cation-transporting ATPase I (ctpI) from Mycobacterium tuberculosis (strain CDC 1551 / Oshkosh).